Reading from the N-terminus, the 904-residue chain is Putative pentatricopeptide repeat-containing protein At1g19290 (904 aa).

PPR repeat units lie at residues 154–188, 189–223, 224–254, 260–294, 295–329, 330–364, 365–399, 400–434, 435–469, 470–504, 505–539, 540–574, 575–609, 610–644, 645–679, 718–753, 754–788, 789–823, and 824–858; these read SPTV…GRIP, SLLS…EVSP, DVFT…TESS, NVVT…GVSR, NVVT…KLVA, DQHM…GVRT, NTTI…SLKP, DHHT…EVVP, TVMT…GVNA, DEIS…GLLT, DTIT…RCKP, AVQT…GIFP, TIEM…GLTP, TVAT…GITL, NVNI…DLLL, NNIV…RFIP, DEYT…GIIP, NIVT…GITP, and NAIT…GLVR.

The protein belongs to the PPR family. P subfamily.

In Arabidopsis thaliana (Mouse-ear cress), this protein is Putative pentatricopeptide repeat-containing protein At1g19290.